The sequence spans 467 residues: Asparagine--tRNA ligase (467 aa).

The protein belongs to the class-II aminoacyl-tRNA synthetase family. In terms of assembly, homodimer.

The protein resides in the cytoplasm. The catalysed reaction is tRNA(Asn) + L-asparagine + ATP = L-asparaginyl-tRNA(Asn) + AMP + diphosphate + H(+). In Haemophilus influenzae (strain ATCC 51907 / DSM 11121 / KW20 / Rd), this protein is Asparagine--tRNA ligase.